Here is a 621-residue protein sequence, read N- to C-terminus: DnaJ homolog subfamily C member 2 (621 aa).

M1 carries the post-translational modification N-acetylmethionine. Positions 23-31 (STLCQVEPV) are epitope (recognized by CD8(+) cytotoxic T-lymphocytes). Residues S47, S49, S60, and S63 each carry the phosphoserine modification. The region spanning 88-161 (DHYAVLGLGH…VKRRAFNSVD (74 aa)) is the J domain. The tract at residues 160 to 250 (VDPTFDNSVP…RDERRWIEKQ (91 aa)) is ZRF1-UBD. Disordered regions lie at residues 294–315 (EKKAKAEAKRKEQEAKEKQRQA) and 426–453 (KEEAEARMRQASKNTEKSTGGGGNGSKN). SANT domains follow at residues 449-511 (NGSK…KLDP) and 549-604 (TDFT…EMVK).

Component of ribosome-associated complex (RAC), a heterodimer composed of Hsp70/DnaK-type chaperone HSPA14 and Hsp40/DnaJ-type chaperone DNAJC2. Interacts (via ZRF1-UBD region) with ID1. Phosphorylated in M (mitotic) phase. As to expression, widely expressed.

The protein resides in the nucleus. It localises to the cytoplasm. It is found in the cytosol. In terms of biological role, acts both as a chaperone in the cytosol and as a chromatin regulator in the nucleus. When cytosolic, acts as a molecular chaperone: component of the ribosome-associated complex (RAC), a complex involved in folding or maintaining nascent polypeptides in a folding-competent state. In the RAC complex, stimulates the ATPase activity of the ribosome-associated pool of Hsp70-type chaperones HSPA14 that bind to the nascent polypeptide chain. When nuclear, mediates the switching from polycomb-repressed genes to an active state: specifically recruited at histone H2A ubiquitinated at 'Lys-119' (H2AK119ub), and promotes the displacement of the polycomb PRC1 complex from chromatin, thereby facilitating transcription activation. In Homo sapiens (Human), this protein is DnaJ homolog subfamily C member 2 (DNAJC2).